A 45-amino-acid chain; its full sequence is DNA-directed RNA polymerase subunit Rpo12 (45 aa).

Zn(2+) is bound by residues Cys8, Cys23, and Cys26.

This sequence belongs to the archaeal Rpo12/eukaryotic RPC10 RNA polymerase subunit family. As to quaternary structure, part of the RNA polymerase complex. The cofactor is Zn(2+).

The protein resides in the cytoplasm. The enzyme catalyses RNA(n) + a ribonucleoside 5'-triphosphate = RNA(n+1) + diphosphate. In terms of biological role, DNA-dependent RNA polymerase (RNAP) catalyzes the transcription of DNA into RNA using the four ribonucleoside triphosphates as substrates. This chain is DNA-directed RNA polymerase subunit Rpo12, found in Methanothrix thermoacetophila (strain DSM 6194 / JCM 14653 / NBRC 101360 / PT) (Methanosaeta thermophila).